The chain runs to 202 residues: Putative transmembrane protein ORF202 (202 aa).

The next 5 membrane-spanning stretches (helical) occupy residues A13 to I33, V40 to G60, Y87 to F107, Y156 to S176, and L177 to A197.

The protein resides in the host membrane. The polypeptide is Putative transmembrane protein ORF202 (Acidianus filamentous virus 2 (isolate Italy/Pozzuoli) (AFV-2)).